We begin with the raw amino-acid sequence, 159 residues long: Deoxyuridine 5'-triphosphate nucleotidohydrolase (159 aa).

Residues 78–80 (RSG), N91, 95–97 (LID), and M105 each bind substrate.

It belongs to the dUTPase family. Mg(2+) serves as cofactor.

The catalysed reaction is dUTP + H2O = dUMP + diphosphate + H(+). It participates in pyrimidine metabolism; dUMP biosynthesis; dUMP from dCTP (dUTP route): step 2/2. This enzyme is involved in nucleotide metabolism: it produces dUMP, the immediate precursor of thymidine nucleotides and it decreases the intracellular concentration of dUTP so that uracil cannot be incorporated into DNA. This Buchnera aphidicola subsp. Schizaphis graminum (strain Sg) protein is Deoxyuridine 5'-triphosphate nucleotidohydrolase.